The sequence spans 507 residues: Arabinose import ATP-binding protein AraG (507 aa).

ABC transporter domains follow at residues 14-249 (LRFN…MVGR) and 249-505 (RDIQ…LPRT). 46-53 (GENGAGKS) serves as a coordination point for ATP.

Belongs to the ABC transporter superfamily. Arabinose importer (TC 3.A.1.2.2) family. As to quaternary structure, the complex is composed of two ATP-binding proteins (AraG), two transmembrane proteins (AraH) and a solute-binding protein (AraF).

It localises to the cell inner membrane. The enzyme catalyses L-arabinose(out) + ATP + H2O = L-arabinose(in) + ADP + phosphate + H(+). Functionally, part of the ABC transporter complex AraFGH involved in arabinose import. Responsible for energy coupling to the transport system. The sequence is that of Arabinose import ATP-binding protein AraG from Pseudomonas syringae pv. syringae (strain B728a).